A 297-amino-acid polypeptide reads, in one-letter code: TGF-beta receptor type-2 (297 aa).

The first 23 residues, 1–23 (MGRGLLGGLWPLHVVLWTRIAST), serve as a signal peptide directing secretion. Residues 24-166 (IPPHVPKSVN…NPDLLLVIFQ (143 aa)) are Extracellular-facing. Intrachain disulfides connect Cys-51–Cys-84, Cys-54–Cys-71, Cys-61–Cys-67, Cys-77–Cys-101, Cys-121–Cys-136, and Cys-138–Cys-143. 2 N-linked (GlcNAc...) asparagine glycosylation sites follow: Asn-70 and Asn-94. Residues 167–187 (VTGVSLLPPLGIAIAVIITFY) form a helical membrane-spanning segment. Residues 188–297 (CYRVHRQQKL…KTEKDIFSDL (110 aa)) lie on the Cytoplasmic side of the membrane. One can recognise a Protein kinase domain in the interval 244 to 297 (IELDTLVGKGRFAEVYKAKLRQNTSEQFETVAVKIFPYEEYASWKTEKDIFSDL). ATP-binding positions include 250 to 258 (VGKGRFAEV) and Lys-277.

This sequence belongs to the protein kinase superfamily. TKL Ser/Thr protein kinase family. TGFB receptor subfamily. Homodimer. Heterohexamer; TGFB1, TGFB2 and TGFB3 homodimeric ligands assemble a functional receptor composed of two TGFBR1 and TGFBR2 heterodimers to form a ligand-receptor heterohexamer. The respective affinity of TGFRB1 and TGFRB2 for the ligands may modulate the kinetics of assembly of the receptor and may explain the different biological activities of TGFB1, TGFB2 and TGFB3. Component of a complex composed of TSC22D1 (via N-terminus), TGFBR1 and TGFBR2; the interaction between TSC22D1 and TGFBR1 is inhibited by SMAD7 and promoted by TGFB1. Interacts with DAXX. Interacts with DYNLT4. Interacts with ZFYVE9; ZFYVE9 recruits SMAD2 and SMAD3 to the TGF-beta receptor. Interacts with and is activated by SCUBE3; this interaction does not affect TGFB1-binding to TGFBR2. Interacts with VPS39; this interaction is independent of the receptor kinase activity and of the presence of TGF-beta. Interacts with CLU. Requires Mg(2+) as cofactor. Mn(2+) is required as a cofactor. Post-translationally, phosphorylated on a Ser/Thr residue in the cytoplasmic domain.

Its subcellular location is the cell membrane. It localises to the membrane raft. It catalyses the reaction L-threonyl-[receptor-protein] + ATP = O-phospho-L-threonyl-[receptor-protein] + ADP + H(+). The catalysed reaction is L-seryl-[receptor-protein] + ATP = O-phospho-L-seryl-[receptor-protein] + ADP + H(+). Transmembrane serine/threonine kinase forming with the TGF-beta type I serine/threonine kinase receptor, TGFBR1, the non-promiscuous receptor for the TGF-beta cytokines TGFB1, TGFB2 and TGFB3. Transduces the TGFB1, TGFB2 and TGFB3 signal from the cell surface to the cytoplasm and is thus regulating a plethora of physiological and pathological processes including cell cycle arrest in epithelial and hematopoietic cells, control of mesenchymal cell proliferation and differentiation, wound healing, extracellular matrix production, immunosuppression and carcinogenesis. The formation of the receptor complex composed of 2 TGFBR1 and 2 TGFBR2 molecules symmetrically bound to the cytokine dimer results in the phosphorylation and the activation of TGFRB1 by the constitutively active TGFBR2. Activated TGFBR1 phosphorylates SMAD2 which dissociates from the receptor and interacts with SMAD4. The SMAD2-SMAD4 complex is subsequently translocated to the nucleus where it modulates the transcription of the TGF-beta-regulated genes. This constitutes the canonical SMAD-dependent TGF-beta signaling cascade. Also involved in non-canonical, SMAD-independent TGF-beta signaling pathways. This Sus scrofa (Pig) protein is TGF-beta receptor type-2 (TGFBR2).